The primary structure comprises 183 residues: GTP cyclohydrolase 1 (183 aa).

The Zn(2+) site is built by Cys-71, His-74, and Cys-142.

Belongs to the GTP cyclohydrolase I family. Homomer.

The catalysed reaction is GTP + H2O = 7,8-dihydroneopterin 3'-triphosphate + formate + H(+). The protein operates within cofactor biosynthesis; 7,8-dihydroneopterin triphosphate biosynthesis; 7,8-dihydroneopterin triphosphate from GTP: step 1/1. In Leptospira biflexa serovar Patoc (strain Patoc 1 / Ames), this protein is GTP cyclohydrolase 1.